Consider the following 588-residue polypeptide: MPTLRDSTMSHPGENPHQVRVKAYYRGDIMITHFEPSISYEGLCNEVRDMCSMDNDQLFTMKWIDEEGDPCTVSSQLELEEALRLYELNKDSELIIHVFPCVPEKPGMPCPGEDKSIYRRGARRWRKLYYATGHAFQAKRFNRRAHCAICTDRIWGLGRQGYKCINCKLLVHKKCHKLVTVECGRQVIQDPMIGRIDPGSTHPEHPDQVLGKKNSTESINHEGEEHEAVGSRESGKAVSSLGLIDFDLLRVIGRGSYAKVLLVRLKKTERIYAMKVVKKELVNDDEDIDWVQTEKHVFEQASNHPFLVGLHSCFQTESRLFFVIEYVNGGDLMFHMQRQRKLPEEHARFYSAEISLALNYLHERGIIYRDLKLDNVLLDSEGHIKLTDYGMCKEGLRPGDTTSTFCGTPNYIAPEILRGEDYGFSVDWWALGVLMFEMMAGRSPFDIVGSSDNPDQNTEDYLFQVILEKQIRIPRSLSVKAASVLKGFLNKESKERLGCHPQTGFADIMAHPFFRNVDWDLMEQKQVVPPFKPNISGEFGLDNFDAQFTNEPIQLTPDDDDAVKKIDQSEFEGFEYINPLLMSAEECV.

The PB1 domain occupies 18-101 (QVRVKAYYRG…SELIIHVFPC (84 aa)). The segment at 133-183 (GHAFQAKRFNRRAHCAICTDRIWGLGRQGYKCINCKLLVHKKCHKLVTVEC) adopts a Phorbol-ester/DAG-type zinc-finger fold. Residues 194–213 (GRIDPGSTHPEHPDQVLGKK) form a disordered region. Positions 246 to 514 (FDLLRVIGRG…FADIMAHPFF (269 aa)) constitute a Protein kinase domain. Residues 252-260 (IGRGSYAKV) and K275 each bind ATP. D370 serves as the catalytic Proton acceptor. A phosphothreonine mark is found at T404 and T556. The AGC-kinase C-terminal domain occupies 515-586 (RNVDWDLMEQ…INPLLMSAEE (72 aa)).

It belongs to the protein kinase superfamily. AGC Ser/Thr protein kinase family. PKC subfamily.

The catalysed reaction is L-seryl-[protein] + ATP = O-phospho-L-seryl-[protein] + ADP + H(+). The enzyme catalyses L-threonyl-[protein] + ATP = O-phospho-L-threonyl-[protein] + ADP + H(+). Its activity is regulated as follows. Exhibits an elevated basal enzymatic activity and is not regulated by diacylglycerol, phosphatidylserine, phorbol esters or calcium ions. Two specific sites, Thr-404 (activation loop of the kinase domain) and Thr-556 (turn motif), need to be phosphorylated for its full activation. In terms of biological role, calcium- and diacylglycerol-independent serine/ threonine-protein kinase that plays a general protective role against apoptotic stimuli, is involved in NF-kappa-B activation, cell survival, differentiation and polarity, and contributes to the regulation of microtubule dynamics in the early secretory pathway. Is required for the formation and maintenance of the zonula adherens during early epithelial development and plays a critical role in organ morphogenesis and in regulating the orientation of cell division. Required for polarized epithelial organization, myocardium coherence and cell connectivity in the early somite stages. Required for heart cone tilt and development of circulatory architecture during embryogenesis. The sequence is that of Protein kinase C iota type (prkci) from Danio rerio (Zebrafish).